The sequence spans 89 residues: uncharacterized protein (89 aa).

This is an uncharacterized protein from Sinorhizobium fredii (strain NBRC 101917 / NGR234).